A 340-amino-acid polypeptide reads, in one-letter code: MAVQMEYEKDVKVPALDGKKIAVIGYGSQGHAHSQNLRDTGHDVIIGVRPGKSFDKAKEDGFDTYTVAEATKLADVIMILAPDEIQQELYEAEIAPNLEAGNAVGFAHGFNIHFEFIKVPADVDVFMCAPKGPGHLVRRTFEEGFGVPALYAVYQDATGNAKDIAMDWCKGIGAARVGLLETTYKEETEEDLFGEQAVLCGGLTALIETGFEVLTEAGYAPELAYFEVLHEMKLIVDLIYEGGFKKMRQSISNTAEFGDYVSGPRVITEQVKENMKAVLADIQNGKFANDFVNDYKAGRPKLTAYREEAANLEIEKVGAELRKAMPFVGQNDDDAFKIYN.

Residues Val-3–Thr-182 form the KARI N-terminal Rossmann domain. NADP(+) contacts are provided by residues Tyr-26 to Gln-29, Arg-49, Ser-53, and Asp-83 to Gln-86. Residue His-108 is part of the active site. Gly-134 serves as a coordination point for NADP(+). Residues Thr-183–Val-328 form the KARI C-terminal knotted domain. Residues Asp-191, Glu-195, Glu-227, and Glu-231 each contribute to the Mg(2+) site. Residue Ser-252 coordinates substrate.

It belongs to the ketol-acid reductoisomerase family. It depends on Mg(2+) as a cofactor.

It carries out the reaction (2R)-2,3-dihydroxy-3-methylbutanoate + NADP(+) = (2S)-2-acetolactate + NADPH + H(+). The catalysed reaction is (2R,3R)-2,3-dihydroxy-3-methylpentanoate + NADP(+) = (S)-2-ethyl-2-hydroxy-3-oxobutanoate + NADPH + H(+). It functions in the pathway amino-acid biosynthesis; L-isoleucine biosynthesis; L-isoleucine from 2-oxobutanoate: step 2/4. The protein operates within amino-acid biosynthesis; L-valine biosynthesis; L-valine from pyruvate: step 2/4. In terms of biological role, involved in the biosynthesis of branched-chain amino acids (BCAA). Catalyzes an alkyl-migration followed by a ketol-acid reduction of (S)-2-acetolactate (S2AL) to yield (R)-2,3-dihydroxy-isovalerate. In the isomerase reaction, S2AL is rearranged via a Mg-dependent methyl migration to produce 3-hydroxy-3-methyl-2-ketobutyrate (HMKB). In the reductase reaction, this 2-ketoacid undergoes a metal-dependent reduction by NADPH to yield (R)-2,3-dihydroxy-isovalerate. This is Ketol-acid reductoisomerase (NADP(+)) from Streptococcus thermophilus (strain ATCC BAA-491 / LMD-9).